Here is a 466-residue protein sequence, read N- to C-terminus: MSHQSDLIEEDIQAYLKQHENKELVRFLTCGSVDDGKSTLIGRLLHDSKMIFEDQLAAIEKDSKKSGTTGEAIDLALLVDGLQSEREQGITIDVAYRYFSTDKRKFIIADTPGHEQYTRNMATGASTCDIAIILIDARYGVQTQTRRHSFICSLLGIKHIVVAVNKMDLVDYSQERYQEIKKEYREFTESLEFSDVRFVPLSALNGDNVVDESVNMPWYPGATLMKLLNTIDVKTQEQFTQLRFQVQYVNRPNLDFRGFAGTLASGHVLVGDTIVALPSGKESVVKEIVTYDGNLERADKGMAVTLTLEDEIDISRGEIIVKKGSLPISAKEFSATVVWMHENELEPGREYFIKHGSKMTTGHAQNIVSKYDVNTMESLSSSQLAINDIGIVNFVAGETLHFDAYEDNQGTGAFIIIDRLSNVTVGAGMINHAIDEKAQEYSAFELELNALVRKQFPHWGARDITK.

One can recognise a tr-type G domain in the interval 22–237 (KELVRFLTCG…LNTIDVKTQE (216 aa)). The tract at residues 31 to 38 (GSVDDGKS) is G1. 31–38 (GSVDDGKS) is a binding site for GTP. The segment at 89–93 (GITID) is G2. Positions 110–113 (DTPG) are G3. Residues 110 to 114 (DTPGH) and 165 to 168 (NKMD) contribute to the GTP site. The segment at 165 to 168 (NKMD) is G4. Residues 202–204 (SAL) form a G5 region.

Belongs to the TRAFAC class translation factor GTPase superfamily. Classic translation factor GTPase family. CysN/NodQ subfamily. As to quaternary structure, heterodimer composed of CysD, the smaller subunit, and CysN.

The catalysed reaction is sulfate + ATP + H(+) = adenosine 5'-phosphosulfate + diphosphate. It participates in sulfur metabolism; hydrogen sulfide biosynthesis; sulfite from sulfate: step 1/3. In terms of biological role, with CysD forms the ATP sulfurylase (ATPS) that catalyzes the adenylation of sulfate producing adenosine 5'-phosphosulfate (APS) and diphosphate, the first enzymatic step in sulfur assimilation pathway. APS synthesis involves the formation of a high-energy phosphoric-sulfuric acid anhydride bond driven by GTP hydrolysis by CysN coupled to ATP hydrolysis by CysD. The polypeptide is Sulfate adenylyltransferase subunit 1 (Colwellia psychrerythraea (strain 34H / ATCC BAA-681) (Vibrio psychroerythus)).